Consider the following 94-residue polypeptide: Co-chaperonin GroES (94 aa).

The protein belongs to the GroES chaperonin family. In terms of assembly, heptamer of 7 subunits arranged in a ring. Interacts with the chaperonin GroEL.

The protein resides in the cytoplasm. Its function is as follows. Together with the chaperonin GroEL, plays an essential role in assisting protein folding. The GroEL-GroES system forms a nano-cage that allows encapsulation of the non-native substrate proteins and provides a physical environment optimized to promote and accelerate protein folding. GroES binds to the apical surface of the GroEL ring, thereby capping the opening of the GroEL channel. This is Co-chaperonin GroES from Streptococcus oralis.